The chain runs to 372 residues: MAWTKYQLFLAGLMLVTGSINTLSAKWADNFEAEGCGGSQEHSFKHPFVQAVGMFLGEFSCLAAFYLLKCRARRQSDSSVEPRQPFNALLFLPPALCDMTGTSIMYVALNMTSASSFQMLRGAVIIFTGLFSVAFLDRRLVPSQWLGILITIAGLVVVGLADLLSKHDSQHKLSEVITGDLLIIMAQIIIAIQMVLEEKFVYKHNIHPLQAVGIEGFFGFVILSLLLVPMYYIPTASFSGNPRGVLEDALDAFCQVGRQPLIALALLGNISSIAFFNFSGISVTKELSATTRMVLDTLRTVVIWAFTLALGWEVFHPLQILGFLILLMGTALYNGLHRPLLACLSRRWRHPTQEGEQERLLGDSRTPINETS.

The first 18 residues, 1–18, serve as a signal peptide directing secretion; that stretch reads MAWTKYQLFLAGLMLVTG. The next 2 helical transmembrane spans lie at 48 to 68 and 89 to 109; these read FVQAVGMFLGEFSCLAAFYLL and LLFLPPALCDMTGTSIMYVAL. Residues 105-160 enclose the EamA domain; sequence MYVALNMTSASSFQMLRGAVIIFTGLFSVAFLDRRLVPSQWLGILITIAGLVVVGL. N-linked (GlcNAc...) asparagine glycosylation occurs at Asn110. 7 consecutive transmembrane segments (helical) span residues 116–136, 145–165, 176–196, 211–231, 261–281, 293–312, and 320–336; these read SFQMLRGAVIIFTGLFSVAFL, WLGILITIAGLVVVGLADLLS, VITGDLLIIMAQIIIAIQMVL, AVGIEGFFGFVILSLLLVPMY, LIALALLGNISSIAFFNFSGI, MVLDTLRTVVIWAFTLALGW, and ILGFLILLMGTALYNGL. Thr366 bears the Phosphothreonine mark.

The protein belongs to the SLC35F solute transporter family. In terms of assembly, interacts with SLC25A5.

It is found in the mitochondrion. It localises to the lysosome membrane. Involved in the maintenance of mitochondrial membrane potential in pancreatic ductal adenocarcinoma (PDAC) cells. Promotes pancreatic ductal adenocarcinoma (PDAC) cell growth. May play a role as a nucleotide-sugar transporter. The sequence is that of Solute carrier family 35 member F6 (Slc35f6) from Rattus norvegicus (Rat).